The following is a 64-amino-acid chain: Large ribosomal subunit protein bL35 (64 aa).

2 stretches are compositionally biased toward basic residues: residues 1 to 26 (MPKM…KRSK) and 33 to 44 (LTKKSPKRKRKL). Residues 1–44 (MPKMKTHRGAAKRFKKTGTGKIKRSKAYTSHILTKKSPKRKRKL) are disordered.

The protein belongs to the bacterial ribosomal protein bL35 family.

The polypeptide is Large ribosomal subunit protein bL35 (Alkaliphilus oremlandii (strain OhILAs) (Clostridium oremlandii (strain OhILAs))).